Here is a 254-residue protein sequence, read N- to C-terminus: Nickel import ATP-binding protein NikD (254 aa).

One can recognise an ABC transporter domain in the interval 2–241; it reads PQQIELRNIA…PKHTVTRSLV (240 aa). ATP is bound at residue 36-43; it reads GGSGSGKS.

The protein belongs to the ABC transporter superfamily. Nickel importer (TC 3.A.1.5.3) family. The complex is composed of two ATP-binding proteins (NikD and NikE), two transmembrane proteins (NikB and NikC) and a solute-binding protein (NikA).

It localises to the cell inner membrane. It carries out the reaction Ni(2+)(out) + ATP + H2O = Ni(2+)(in) + ADP + phosphate + H(+). Part of the ABC transporter complex NikABCDE involved in nickel import. Responsible for energy coupling to the transport system. This is Nickel import ATP-binding protein NikD from Escherichia coli (strain K12).